The sequence spans 162 residues: SCF ubiquitin ligase complex protein SKP1b (162 aa).

Ser-2 bears the N-acetylserine mark. The tract at residues 100–162 is interaction with the F-box domain of F-box proteins; that stretch reads ILAANYLDIK…NEWCEDKGGN (63 aa). The residue at position 143 (Pro-143) is a 4-hydroxyproline. An O-linked (GlcNAc...) hydroxyproline glycan is attached at Pro-143.

It belongs to the SKP1 family. Multiprotein complex (SCF) with cullin and F-box-containing protein. Capable of undergoing aggregation. O-linked glycan consists of linear Gal-Gal-Fuc-Gal-GlcNAc. In terms of processing, not glycosylated in prespore cells. Post-translationally, fpaA and fpaB seem to be identically glycosylated. Glycosylation is required for nuclear enrichment. Hydroxylated by phyA.

It is found in the cytoplasm. The protein resides in the nucleus. This is SCF ubiquitin ligase complex protein SKP1b (fpaB-1) from Dictyostelium discoideum (Social amoeba).